The following is a 440-amino-acid chain: Chromosomal replication initiator protein DnaA (440 aa).

The tract at residues 1–74 (MNPSQILENL…VQSGNKAIIN (74 aa)) is domain I, interacts with DnaA modulators. Residues 74–99 (NIQAQSTKQSNKSTKIDIAHIQAQST) are domain II. Residues 100-316 (ILNPSFTFES…GIIISLNAYA (217 aa)) are domain III, AAA+ region. ATP contacts are provided by glycine 146, glycine 148, lysine 149, and threonine 150. The domain IV, binds dsDNA stretch occupies residues 317–440 (TILGQEITLE…KNKILIKSQS (124 aa)).

The protein belongs to the DnaA family. As to quaternary structure, oligomerizes as a right-handed, spiral filament on DNA at oriC.

The protein resides in the cytoplasm. Its function is as follows. Plays an essential role in the initiation and regulation of chromosomal replication. ATP-DnaA binds to the origin of replication (oriC) to initiate formation of the DNA replication initiation complex once per cell cycle. Binds the DnaA box (a 9 base pair repeat at the origin) and separates the double-stranded (ds)DNA. Forms a right-handed helical filament on oriC DNA; dsDNA binds to the exterior of the filament while single-stranded (ss)DNA is stabiized in the filament's interior. The ATP-DnaA-oriC complex binds and stabilizes one strand of the AT-rich DNA unwinding element (DUE), permitting loading of DNA polymerase. After initiation quickly degrades to an ADP-DnaA complex that is not apt for DNA replication. Binds acidic phospholipids. This chain is Chromosomal replication initiator protein DnaA, found in Campylobacter jejuni subsp. doylei (strain ATCC BAA-1458 / RM4099 / 269.97).